We begin with the raw amino-acid sequence, 247 residues long: DNA polymerase sliding clamp (247 aa).

It belongs to the PCNA family. Homotrimer. The subunits circularize to form a toroid; DNA passes through its center. Replication factor C (RFC) is required to load the toroid on the DNA.

In terms of biological role, sliding clamp subunit that acts as a moving platform for DNA processing. Responsible for tethering the catalytic subunit of DNA polymerase and other proteins to DNA during high-speed replication. The protein is DNA polymerase sliding clamp of Methanosphaerula palustris (strain ATCC BAA-1556 / DSM 19958 / E1-9c).